The following is a 174-amino-acid chain: Co-chaperone protein HscB homolog (174 aa).

In terms of domain architecture, J spans Asn2 to Leu74.

It belongs to the HscB family. As to quaternary structure, interacts with HscA and stimulates its ATPase activity.

Co-chaperone involved in the maturation of iron-sulfur cluster-containing proteins. Seems to help targeting proteins to be folded toward HscA. This chain is Co-chaperone protein HscB homolog, found in Shewanella denitrificans (strain OS217 / ATCC BAA-1090 / DSM 15013).